Reading from the N-terminus, the 189-residue chain is Cell division protein SepF (189 aa).

Positions 25 to 70 (ESRVQQQAVKPSNSRPAQQEPVRDIKQPRLVSSSSQHVTNTPSSNE) are disordered. Composition is skewed to polar residues over residues 27–41 (RVQQ…SRPA) and 54–70 (LVSS…SSNE).

Belongs to the SepF family. In terms of assembly, homodimer. Interacts with FtsZ.

The protein resides in the cytoplasm. Functionally, cell division protein that is part of the divisome complex and is recruited early to the Z-ring. Probably stimulates Z-ring formation, perhaps through the cross-linking of FtsZ protofilaments. Its function overlaps with FtsA. The sequence is that of Cell division protein SepF from Streptococcus gordonii (strain Challis / ATCC 35105 / BCRC 15272 / CH1 / DL1 / V288).